A 530-amino-acid chain; its full sequence is Sugar transport protein MST6 (530 aa).

Over 1-18 the chain is Cytoplasmic; it reads MAGGVVVNNGGGKDYPGK. A helical membrane pass occupies residues 19–39; sequence LTMFVLFACIVAATGGLIFGY. Residues 40–81 are Extracellular-facing; sequence DIGISGGVTSMNPFLIKFFPSVYRKEQAAEKNQSNQYCKFDS. Residues 82–102 traverse the membrane as a helical segment; it reads PLLTMFTSSLYLAALVASFFA. The Cytoplasmic portion of the chain corresponds to 103–119; that stretch reads STVTRVAGRKWSMFGGG. Residues 120–140 form a helical membrane-spanning segment; it reads VTFLVGAALNGAAKNVLMLIL. Residues 141 to 142 are Extracellular-facing; it reads GR. A helical transmembrane segment spans residues 143–163; that stretch reads VLLGVGVGFANQSVPLYLSEM. At 164 to 169 the chain is on the cytoplasmic side; it reads APARLR. A helical transmembrane segment spans residues 170-190; sequence GMLNIGFQLMITIGILCANLI. Residues 191 to 204 lie on the Extracellular side of the membrane; sequence NYGTAKIKGGWGWR. The helical transmembrane segment at 205 to 225 threads the bilayer; that stretch reads VSLALAAVPAAIIAVGALFLP. Residues 226–291 lie on the Cytoplasmic side of the membrane; sequence DTPNSLIDRG…YRPQLTMAIA (66 aa). Residues 292-312 form a helical membrane-spanning segment; that stretch reads IPLFQQLTGINVIMFYAPVLF. Topologically, residues 313–323 are extracellular; sequence KTLGFADDASL. The chain crosses the membrane as a helical span at residues 324 to 344; it reads MSAVITGLVNVFATFVSIVTV. Residues 345–359 are Cytoplasmic-facing; that stretch reads DRLGRRKLFLQGGTQ. A helical transmembrane segment spans residues 360 to 380; sequence MLACQIVVGSLIGAKFGFSGV. Over 381 to 388 the chain is Extracellular; it reads ADIPKAYA. A helical transmembrane segment spans residues 389-409; the sequence is AFVVLFICAYVAGFAWSWGPL. Topologically, residues 410–428 are cytoplasmic; that stretch reads GWLVPSEIFPLEIRSAGQS. Residues 429-449 traverse the membrane as a helical segment; that stretch reads INVSVNMLFTFIIAQAFLPML. Residues 450–453 lie on the Extracellular side of the membrane; the sequence is CRFK. A helical transmembrane segment spans residues 454–474; that stretch reads FILFFFFGAWVVIMTLFVAFF. Topologically, residues 475 to 530 are cytoplasmic; that stretch reads LPETKNVPIEEMVLVWKSHWYWGRFIRDEDVHVGADVEMPAAGNRNGKVDPAKLAN.

It belongs to the major facilitator superfamily. Sugar transporter (TC 2.A.1.1) family. In terms of tissue distribution, expressed in leaf blades, leaf sheaths, anthers, ovaries and embryos. Expressed at low levels in roots and shoots.

Its subcellular location is the cell membrane. In terms of biological role, mediates active uptake of hexoses by sugar:proton symport. Can transport glucose, fructose, mannose, galactose, xylose and ribose. This chain is Sugar transport protein MST6, found in Oryza sativa subsp. japonica (Rice).